The following is a 507-amino-acid chain: Hippocampus abundant transcript-like protein 1 (507 aa).

The interval 1–22 is disordered; that stretch reads MSTDGESPEEPGWKAVASPKAS. Topologically, residues 1–51 are extracellular; sequence MSTDGESPEEPGWKAVASPKASAMPEKRGSAQAASSSWLQGFGQPSVYHAA. The helical transmembrane segment at 52 to 72 threads the bilayer; that stretch reads FVIFFEFFAWGLLTTPMLTVL. At 73–84 the chain is on the cytoplasmic side; it reads HETFPQHTFLMN. A helical transmembrane segment spans residues 85 to 105; the sequence is GLIQGVKGLLSFLSAPLIGAL. The Extracellular segment spans residues 106–113; that stretch reads SDVWGRKP. The helical transmembrane segment at 114–134 threads the bilayer; the sequence is FLLGTVFFTCFPIPLMRISPW. Over 135 to 136 the chain is Cytoplasmic; it reads WY. A helical transmembrane segment spans residues 137-157; sequence FGMISVSGVFSVTFSVIFAYV. Topologically, residues 158–170 are extracellular; sequence ADFTQEHERSTAY. Residues 171–191 form a helical membrane-spanning segment; it reads GWVSATFAASLVSSPAIGTYL. Topologically, residues 192–198 are cytoplasmic; sequence SSNYGDS. The helical transmembrane segment at 199 to 219 threads the bilayer; the sequence is LVVLVATVVALLDICFILVAV. Over 220–257 the chain is Extracellular; it reads PESLPEKIRPASWGAQISWKQADPFASLKKVGKDSTVL. The helical transmembrane segment at 258–278 threads the bilayer; the sequence is LICITVFLSYLPEAGQYSSFF. Residues 279–283 lie on the Cytoplasmic side of the membrane; that stretch reads LYLRQ. Residues 284–304 form a helical membrane-spanning segment; sequence VIGFGSVKIVAFIAMVGILSI. Over 305–323 the chain is Extracellular; that stretch reads LAQTVFLSKLMRSLGNKNT. A helical transmembrane segment spans residues 324–344; the sequence is VLLGLGFQILQLAWYGFGAQA. Over 345–347 the chain is Cytoplasmic; that stretch reads WMM. A helical membrane pass occupies residues 348–368; the sequence is WAAGTVAAMSSITFPAVSALI. The Extracellular segment spans residues 369-389; it reads SRNAESDQQGVAQGIITGIRG. Residues 390-410 traverse the membrane as a helical segment; that stretch reads LCNGLGPALYGFIFYLFHVEL. The Cytoplasmic portion of the chain corresponds to 411-430; it reads NELGPKLDSDNDPLQGAFIP. The helical transmembrane segment at 431 to 451 threads the bilayer; sequence GPPFLFGACIVLMSFLVALFI. Topologically, residues 452–507 are extracellular; that stretch reads PEYRKTGGVQKHNNSISGSLSTPPERGSDEDIEPLLQDSNIWELSSEEPGNQCTEL. Positions 462–473 are enriched in polar residues; sequence KHNNSISGSLST. A disordered region spans residues 462–483; it reads KHNNSISGSLSTPPERGSDEDI. An N-linked (GlcNAc...) asparagine glycan is attached at N464.

Belongs to the major facilitator superfamily.

It localises to the membrane. The sequence is that of Hippocampus abundant transcript-like protein 1 from Rattus norvegicus (Rat).